The sequence spans 425 residues: Probable sucrose-phosphatase 3a (425 aa).

This sequence belongs to the sucrose phosphatase family. In terms of assembly, homodimer. It depends on Mg(2+) as a cofactor.

It carries out the reaction sucrose 6(F)-phosphate + H2O = sucrose + phosphate. It participates in glycan biosynthesis; sucrose biosynthesis; sucrose from D-fructose 6-phosphate and UDP-alpha-D-glucose: step 2/2. Its function is as follows. Catalyzes the final step of sucrose synthesis. In Arabidopsis thaliana (Mouse-ear cress), this protein is Probable sucrose-phosphatase 3a (SPP3A).